Reading from the N-terminus, the 393-residue chain is N-lysine methyltransferase KMT5A (393 aa).

The disordered stretch occupies residues 68–88; sequence PGPEMVERRGPGRPRTDGENV. Residues 72–85 show a composition bias toward basic and acidic residues; the sequence is MVERRGPGRPRTDG. Ser100 carries the phosphoserine modification. Residues 134–163 adopt a coiled-coil conformation; the sequence is RKREEKRNAGNAVRSAMKSEEQKIKDARKG. Residues 135–241 are disordered; sequence KREEKRNAGN…SRKSKAELQS (107 aa). A compositionally biased stretch (basic and acidic residues) spans 150 to 162; it reads MKSEEQKIKDARK. An N6-acetyllysine modification is found at Lys162. Thr181 is subject to Phosphothreonine. Residues 197–213 show a composition bias toward basic residues; that stretch reads ALKKPIKGKQAPRKKAQ. In terms of domain architecture, SET spans 257–378; the sequence is EGMKIDLIDG…AGEELLYDYG (122 aa). Residues 267–269, Tyr312, and 339–340 each bind S-adenosyl-L-methionine; these read KGR and NH.

The protein belongs to the class V-like SAM-binding methyltransferase superfamily. Histone-lysine methyltransferase family. PR/SET subfamily. Interacts with L3MBTL1. As to quaternary structure, interacts with SIRT2 (phosphorylated form); the interaction is direct, stimulates KMT5A-mediated methyltransferase activity at histone H4 'Lys-20' (H4K20me1) and is increased in a H(2)O(2)-induced oxidative stress-dependent manner. Acetylated at Lys-162; does not affect methyltransferase activity. Deacetylated at Lys-162 possibly by SIRT2; does not change methyltransferase activity. In terms of processing, ubiquitinated and degraded by the DCX(DTL) complex.

It is found in the nucleus. The protein resides in the chromosome. The enzyme catalyses L-lysyl(20)-[histone H4] + S-adenosyl-L-methionine = N(6)-methyl-L-lysyl(20)-[histone H4] + S-adenosyl-L-homocysteine + H(+). It catalyses the reaction L-lysyl-[protein] + S-adenosyl-L-methionine = N(6)-methyl-L-lysyl-[protein] + S-adenosyl-L-homocysteine + H(+). In terms of biological role, protein-lysine N-methyltransferase that monomethylates both histones and non-histone proteins. Specifically monomethylates 'Lys-20' of histone H4 (H4K20me1). H4K20me1 is enriched during mitosis and represents a specific tag for epigenetic transcriptional repression. Mainly functions in euchromatin regions, thereby playing a central role in the silencing of euchromatic genes. Required for cell proliferation, probably by contributing to the maintenance of proper higher-order structure of DNA during mitosis. Involved in chromosome condensation and proper cytokinesis. Nucleosomes are preferred as substrate compared to free histones. Mediates monomethylation of p53/TP53 at 'Lys-382', leading to repress p53/TP53-target genes. Plays a negative role in TGF-beta response regulation and a positive role in cell migration. This Homo sapiens (Human) protein is N-lysine methyltransferase KMT5A.